The sequence spans 126 residues: MAIREYLWVSLGGIVGACARYFLSRFTAKITGTSFPWGTLLINITGSFVLGLFLVYTTERVFVDPKWRLLIAIGFCGAYTTFSSYAYESMVYFQQGNWGLFAGNVLANNILCLAAVLGAGALVRSI.

The next 4 membrane-spanning stretches (helical) occupy residues 7–24, 35–55, 69–89, and 98–118; these read LWVSLGGIVGACARYFLS, FPWGTLLINITGSFVLGLFLV, LLIAIGFCGAYTTFSSYAYES, and WGLFAGNVLANNILCLAAVLG. G77 and T80 together coordinate Na(+).

It belongs to the fluoride channel Fluc/FEX (TC 1.A.43) family.

It is found in the cell inner membrane. It catalyses the reaction fluoride(in) = fluoride(out). With respect to regulation, na(+) is not transported, but it plays an essential structural role and its presence is essential for fluoride channel function. Its function is as follows. Fluoride-specific ion channel. Important for reducing fluoride concentration in the cell, thus reducing its toxicity. The protein is Fluoride-specific ion channel FluC of Koribacter versatilis (strain Ellin345).